The sequence spans 89 residues: UPF0213 protein LSEI_1587 (89 aa).

The region spanning 4 to 79 (KTYYFYVLLC…KHQTRHRKEV (76 aa)) is the GIY-YIG domain.

This sequence belongs to the UPF0213 family.

In Lacticaseibacillus paracasei (strain ATCC 334 / BCRC 17002 / CCUG 31169 / CIP 107868 / KCTC 3260 / NRRL B-441) (Lactobacillus paracasei), this protein is UPF0213 protein LSEI_1587.